Consider the following 212-residue polypeptide: Thiamine-phosphate synthase (212 aa).

38-42 (QLREK) contributes to the 4-amino-2-methyl-5-(diphosphooxymethyl)pyrimidine binding site. Mg(2+)-binding residues include Asp-71 and Asp-90. Residue Lys-138 coordinates 4-amino-2-methyl-5-(diphosphooxymethyl)pyrimidine. Residue Gly-166 coordinates 2-[(2R,5Z)-2-carboxy-4-methylthiazol-5(2H)-ylidene]ethyl phosphate.

This sequence belongs to the thiamine-phosphate synthase family. Mg(2+) is required as a cofactor.

It carries out the reaction 2-[(2R,5Z)-2-carboxy-4-methylthiazol-5(2H)-ylidene]ethyl phosphate + 4-amino-2-methyl-5-(diphosphooxymethyl)pyrimidine + 2 H(+) = thiamine phosphate + CO2 + diphosphate. The enzyme catalyses 2-(2-carboxy-4-methylthiazol-5-yl)ethyl phosphate + 4-amino-2-methyl-5-(diphosphooxymethyl)pyrimidine + 2 H(+) = thiamine phosphate + CO2 + diphosphate. The catalysed reaction is 4-methyl-5-(2-phosphooxyethyl)-thiazole + 4-amino-2-methyl-5-(diphosphooxymethyl)pyrimidine + H(+) = thiamine phosphate + diphosphate. The protein operates within cofactor biosynthesis; thiamine diphosphate biosynthesis; thiamine phosphate from 4-amino-2-methyl-5-diphosphomethylpyrimidine and 4-methyl-5-(2-phosphoethyl)-thiazole: step 1/1. Condenses 4-methyl-5-(beta-hydroxyethyl)thiazole monophosphate (THZ-P) and 2-methyl-4-amino-5-hydroxymethyl pyrimidine pyrophosphate (HMP-PP) to form thiamine monophosphate (TMP). The protein is Thiamine-phosphate synthase of Chlamydia caviae (strain ATCC VR-813 / DSM 19441 / 03DC25 / GPIC) (Chlamydophila caviae).